A 364-amino-acid chain; its full sequence is Histidinol-phosphate aminotransferase (364 aa).

An N6-(pyridoxal phosphate)lysine modification is found at Lys220.

It belongs to the class-II pyridoxal-phosphate-dependent aminotransferase family. Histidinol-phosphate aminotransferase subfamily. In terms of assembly, homodimer. Requires pyridoxal 5'-phosphate as cofactor.

The enzyme catalyses L-histidinol phosphate + 2-oxoglutarate = 3-(imidazol-4-yl)-2-oxopropyl phosphate + L-glutamate. It participates in amino-acid biosynthesis; L-histidine biosynthesis; L-histidine from 5-phospho-alpha-D-ribose 1-diphosphate: step 7/9. The sequence is that of Histidinol-phosphate aminotransferase from Stenotrophomonas maltophilia (strain R551-3).